We begin with the raw amino-acid sequence, 204 residues long: Guanylate kinase (204 aa).

A Guanylate kinase-like domain is found at 18-196 (PKLFTISAPA…SYEILKSIFI (179 aa)). ATP is bound at residue 25-32 (APAGAGKT).

This sequence belongs to the guanylate kinase family.

The protein localises to the cytoplasm. The catalysed reaction is GMP + ATP = GDP + ADP. Its function is as follows. Essential for recycling GMP and indirectly, cGMP. In Chlamydia caviae (strain ATCC VR-813 / DSM 19441 / 03DC25 / GPIC) (Chlamydophila caviae), this protein is Guanylate kinase.